The chain runs to 190 residues: Potassium-transporting ATPase KdpC subunit (190 aa).

The chain crosses the membrane as a helical span at residues 7–27 (PALLMLLVWTLITGVFYPVLV).

Belongs to the KdpC family. In terms of assembly, the system is composed of three essential subunits: KdpA, KdpB and KdpC.

The protein resides in the cell inner membrane. In terms of biological role, part of the high-affinity ATP-driven potassium transport (or Kdp) system, which catalyzes the hydrolysis of ATP coupled with the electrogenic transport of potassium into the cytoplasm. This subunit acts as a catalytic chaperone that increases the ATP-binding affinity of the ATP-hydrolyzing subunit KdpB by the formation of a transient KdpB/KdpC/ATP ternary complex. The polypeptide is Potassium-transporting ATPase KdpC subunit (Methylococcus capsulatus (strain ATCC 33009 / NCIMB 11132 / Bath)).